The sequence spans 342 residues: Cyclin-dependent kinase-like 4 (342 aa).

One can recognise a Protein kinase domain in the interval 4-286 (YEKLAKIGEG…CAQLLDSAYF (283 aa)). Residues 10–18 (IGEGSYGVV) and Lys-33 contribute to the ATP site. The [NKR]KIAxRE signature appears at 45–51 (RKIALRE). The active-site Proton acceptor is the Asp-126. The segment at 295–328 (KRKARSEGRSRRRQQNQLLPLIPGSHISPTPDGR) is disordered.

This sequence belongs to the protein kinase superfamily. CMGC Ser/Thr protein kinase family. CDC2/CDKX subfamily.

The protein resides in the cytoplasm. It carries out the reaction L-seryl-[protein] + ATP = O-phospho-L-seryl-[protein] + ADP + H(+). It catalyses the reaction L-threonyl-[protein] + ATP = O-phospho-L-threonyl-[protein] + ADP + H(+). This Mus musculus (Mouse) protein is Cyclin-dependent kinase-like 4 (Cdkl4).